A 585-amino-acid chain; its full sequence is Serine/threonine-protein kinase Nek3 (585 aa).

One can recognise a Protein kinase domain in the interval 4 to 258; it reads YEVLEQIGKG…AAELLKHPHL (255 aa). Residues 10–18 and Lys33 contribute to the ATP site; that span reads IGKGSFGSA. Catalysis depends on Asp129, which acts as the Proton acceptor. Disordered regions lie at residues 354-413 and 489-511; these read GNHS…TPVN and DSSK…SNPL. Polar residues-rich tracts occupy residues 400-413 and 498-511; these read RASQ…TPVN and SSDP…SNPL.

This sequence belongs to the protein kinase superfamily. NEK Ser/Thr protein kinase family. NIMA subfamily. In terms of assembly, interacts with PLIM2B. Expressed in pollen grains.

It catalyses the reaction L-seryl-[protein] + ATP = O-phospho-L-seryl-[protein] + ADP + H(+). It carries out the reaction L-threonyl-[protein] + ATP = O-phospho-L-threonyl-[protein] + ADP + H(+). May be involved in plant development processes. May function downstream of DCW11 in retrograde signaling from the mitochondria to the nucleus. Seems to be involved in the mechanism of cytoplasmic male sterility (CMS) occurrence. The polypeptide is Serine/threonine-protein kinase Nek3 (Oryza sativa subsp. japonica (Rice)).